The primary structure comprises 146 residues: MNKITNNDTIWIKPKTVEKKWYVIDAADRILGKVAVDVVKILRGKHKAYYTPHQDLGDNVIIINASKVKLTGKKYQQKLYYRHSRYPGGLYSDTFRTLSERKPCAPLEIAIKGMLPKGPLGRNLFRNLKVFSGSEHTLKAQNPIKL.

This sequence belongs to the universal ribosomal protein uL13 family. Part of the 50S ribosomal subunit.

Functionally, this protein is one of the early assembly proteins of the 50S ribosomal subunit, although it is not seen to bind rRNA by itself. It is important during the early stages of 50S assembly. The chain is Large ribosomal subunit protein uL13 from Borreliella burgdorferi (strain ATCC 35210 / DSM 4680 / CIP 102532 / B31) (Borrelia burgdorferi).